The primary structure comprises 842 residues: Protein P (842 aa).

The terminal protein domain (TP) stretch occupies residues M1–Q177. The tract at residues D178 to L345 is spacer. Positions F184 to R238 are disordered. Over residues R197 to P208 the composition is skewed to low complexity. Positions S212–K228 are enriched in polar residues. A polymerase/reverse transcriptase domain (RT) region spans residues Q346–Q689. In terms of domain architecture, Reverse transcriptase spans E356 to I599. The Mg(2+) site is built by D428, D550, and D551.

This sequence belongs to the hepadnaviridae P protein family.

The catalysed reaction is DNA(n) + a 2'-deoxyribonucleoside 5'-triphosphate = DNA(n+1) + diphosphate. The enzyme catalyses Endonucleolytic cleavage to 5'-phosphomonoester.. Activated by host HSP70 and HSP40 in vitro to be able to bind the epsilon loop of the pgRNA. Because deletion of the RNase H region renders the protein partly chaperone-independent, the chaperones may be needed indirectly to relieve occlusion of the RNA-binding site by this domain. Inhibited by several reverse-transcriptase inhibitors: Lamivudine, Adefovir and Entecavir. Its function is as follows. Multifunctional enzyme that converts the viral RNA genome into dsDNA in viral cytoplasmic capsids. This enzyme displays a DNA polymerase activity that can copy either DNA or RNA templates, and a ribonuclease H (RNase H) activity that cleaves the RNA strand of RNA-DNA heteroduplexes in a partially processive 3'- to 5'-endonucleasic mode. Neo-synthesized pregenomic RNA (pgRNA) are encapsidated together with the P protein, and reverse-transcribed inside the nucleocapsid. Initiation of reverse-transcription occurs first by binding the epsilon loop on the pgRNA genome, and is initiated by protein priming, thereby the 5'-end of (-)DNA is covalently linked to P protein. Partial (+)DNA is synthesized from the (-)DNA template and generates the relaxed circular DNA (RC-DNA) genome. After budding and infection, the RC-DNA migrates in the nucleus, and is converted into a plasmid-like covalently closed circular DNA (cccDNA). The activity of P protein does not seem to be necessary for cccDNA generation, and is presumably released from (+)DNA by host nuclear DNA repair machinery. This is Protein P from Hepatitis B virus genotype G (isolate IG29227/2000) (HBV-G).